The chain runs to 62 residues: Beta-defensin 133 (62 aa).

Positions 1-21 (MKIHIFLFVLFFFLVPIATRG) are cleaved as a signal peptide. Disulfide bonds link C32–C60 and C39–C53.

It belongs to the beta-defensin family.

It is found in the secreted. Has antibacterial activity. This Pan troglodytes (Chimpanzee) protein is Beta-defensin 133 (DEFB133).